The chain runs to 102 residues: Ferredoxin-thioredoxin reductase, catalytic chain (102 aa).

Cysteine 53 provides a ligand contact to [4Fe-4S] cluster. Residue cysteine 55 is the Nucleophile of the active site. Cysteine 55 and cysteine 85 are disulfide-bonded. 3 residues coordinate [4Fe-4S] cluster: cysteine 72, cysteine 74, and cysteine 83.

It belongs to the ferredoxin thioredoxin reductase beta subunit family. Heterodimer of subunit A (variable subunit) and subunit B (catalytic subunit). Heterodimeric FTR forms a complex with ferredoxin and thioredoxin. The cofactor is [4Fe-4S] cluster.

It is found in the plastid. The protein resides in the chloroplast. The enzyme catalyses [thioredoxin]-disulfide + 2 reduced [2Fe-2S]-[ferredoxin] + 2 H(+) = [thioredoxin]-dithiol + 2 oxidized [2Fe-2S]-[ferredoxin]. In terms of biological role, catalytic subunit of the ferredoxin-thioredoxin reductase (FTR), which catalyzes the two-electron reduction of thioredoxins by the electrons provided by reduced ferredoxin. This chain is Ferredoxin-thioredoxin reductase, catalytic chain (ftrB), found in Guillardia theta (Cryptophyte).